We begin with the raw amino-acid sequence, 399 residues long: CCA-adding enzyme (399 aa).

ATP is bound by residues glycine 32 and arginine 35. Residues glycine 32 and arginine 35 each coordinate CTP. Aspartate 45 and aspartate 47 together coordinate Mg(2+). ATP contacts are provided by arginine 116, aspartate 159, arginine 162, arginine 165, and arginine 168. The CTP site is built by arginine 116, aspartate 159, arginine 162, arginine 165, and arginine 168.

The protein belongs to the tRNA nucleotidyltransferase/poly(A) polymerase family. Bacterial CCA-adding enzyme type 3 subfamily. In terms of assembly, homodimer. The cofactor is Mg(2+).

It carries out the reaction a tRNA precursor + 2 CTP + ATP = a tRNA with a 3' CCA end + 3 diphosphate. The enzyme catalyses a tRNA with a 3' CCA end + 2 CTP + ATP = a tRNA with a 3' CCACCA end + 3 diphosphate. Functionally, catalyzes the addition and repair of the essential 3'-terminal CCA sequence in tRNAs without using a nucleic acid template. Adds these three nucleotides in the order of C, C, and A to the tRNA nucleotide-73, using CTP and ATP as substrates and producing inorganic pyrophosphate. tRNA 3'-terminal CCA addition is required both for tRNA processing and repair. Also involved in tRNA surveillance by mediating tandem CCA addition to generate a CCACCA at the 3' terminus of unstable tRNAs. While stable tRNAs receive only 3'-terminal CCA, unstable tRNAs are marked with CCACCA and rapidly degraded. The polypeptide is CCA-adding enzyme (Streptococcus pneumoniae (strain CGSP14)).